The sequence spans 879 residues: Alanine--tRNA ligase (879 aa).

Zn(2+) contacts are provided by H566, H570, C668, and H672.

This sequence belongs to the class-II aminoacyl-tRNA synthetase family. It depends on Zn(2+) as a cofactor.

Its subcellular location is the cytoplasm. The catalysed reaction is tRNA(Ala) + L-alanine + ATP = L-alanyl-tRNA(Ala) + AMP + diphosphate. Its function is as follows. Catalyzes the attachment of alanine to tRNA(Ala) in a two-step reaction: alanine is first activated by ATP to form Ala-AMP and then transferred to the acceptor end of tRNA(Ala). Also edits incorrectly charged Ser-tRNA(Ala) and Gly-tRNA(Ala) via its editing domain. The chain is Alanine--tRNA ligase from Oceanobacillus iheyensis (strain DSM 14371 / CIP 107618 / JCM 11309 / KCTC 3954 / HTE831).